The primary structure comprises 1157 residues: DNA-directed RNA polymerase subunit beta (1157 aa).

The protein belongs to the RNA polymerase beta chain family. The RNAP catalytic core consists of 2 alpha, 1 beta, 1 beta' and 1 omega subunit. When a sigma factor is associated with the core the holoenzyme is formed, which can initiate transcription.

The enzyme catalyses RNA(n) + a ribonucleoside 5'-triphosphate = RNA(n+1) + diphosphate. Functionally, DNA-dependent RNA polymerase catalyzes the transcription of DNA into RNA using the four ribonucleoside triphosphates as substrates. This is DNA-directed RNA polymerase subunit beta from Tropheryma whipplei (strain Twist) (Whipple's bacillus).